Consider the following 276-residue polypeptide: Proteasome subunit beta type-8 (276 aa).

A propeptide spans 1 to 72 (MALLDLCGAP…RKVQIEMAHG (72 aa)) (removed in mature form). The Nucleophile role is filled by Thr73.

The protein belongs to the peptidase T1B family. As to quaternary structure, the 26S proteasome consists of a 20S proteasome core and two 19S regulatory subunits. The 20S proteasome core is composed of 28 subunits that are arranged in four stacked rings, resulting in a barrel-shaped structure. The two end rings are each formed by seven alpha subunits, and the two central rings are each formed by seven beta subunits. The catalytic chamber with the active sites is on the inside of the barrel. Component of the immunoproteasome, where it displaces the equivalent housekeeping subunit PSMB5. Component of the spermatoproteasome, a form of the proteasome specifically found in testis. Directly interacts with POMP. Interacts with TAP1. Autocleaved. The resulting N-terminal Thr residue of the mature subunit is responsible for the nucleophile proteolytic activity.

The protein resides in the cytoplasm. It localises to the nucleus. The enzyme catalyses Cleavage of peptide bonds with very broad specificity.. The proteasome is a multicatalytic proteinase complex which is characterized by its ability to cleave peptides with Arg, Phe, Tyr, Leu, and Glu adjacent to the leaving group at neutral or slightly basic pH. The proteasome has an ATP-dependent proteolytic activity. This subunit is involved in antigen processing to generate class I binding peptides. May participate in the generation of spliced peptides resulting from the ligation of two separate proteasomal cleavage products that are not contiguous in the parental protein. Required for adipocyte differentiation. The chain is Proteasome subunit beta type-8 (Psmb8) from Rattus norvegicus (Rat).